We begin with the raw amino-acid sequence, 269 residues long: Elongation factor Ts (269 aa).

The involved in Mg(2+) ion dislocation from EF-Tu stretch occupies residues 76–79 (TDFV).

It belongs to the EF-Ts family.

Its subcellular location is the cytoplasm. Associates with the EF-Tu.GDP complex and induces the exchange of GDP to GTP. It remains bound to the aminoacyl-tRNA.EF-Tu.GTP complex up to the GTP hydrolysis stage on the ribosome. The protein is Elongation factor Ts of Deinococcus geothermalis (strain DSM 11300 / CIP 105573 / AG-3a).